Consider the following 245-residue polypeptide: Orotidine 5'-phosphate decarboxylase (245 aa).

Substrate-binding positions include D22, K44, 71–80 (DLKFHDIPNT), T131, R192, Q201, G221, and R222. The Proton donor role is filled by K73.

Belongs to the OMP decarboxylase family. Type 1 subfamily. As to quaternary structure, homodimer.

It catalyses the reaction orotidine 5'-phosphate + H(+) = UMP + CO2. It functions in the pathway pyrimidine metabolism; UMP biosynthesis via de novo pathway; UMP from orotate: step 2/2. Functionally, catalyzes the decarboxylation of orotidine 5'-monophosphate (OMP) to uridine 5'-monophosphate (UMP). The sequence is that of Orotidine 5'-phosphate decarboxylase from Klebsiella pneumoniae (strain 342).